Reading from the N-terminus, the 206-residue chain is N-(5'-phosphoribosyl)anthranilate isomerase (206 aa).

It belongs to the TrpF family.

The enzyme catalyses N-(5-phospho-beta-D-ribosyl)anthranilate = 1-(2-carboxyphenylamino)-1-deoxy-D-ribulose 5-phosphate. It participates in amino-acid biosynthesis; L-tryptophan biosynthesis; L-tryptophan from chorismate: step 3/5. This Azotobacter vinelandii (strain DJ / ATCC BAA-1303) protein is N-(5'-phosphoribosyl)anthranilate isomerase.